Reading from the N-terminus, the 76-residue chain is Large ribosomal subunit protein eL20 (76 aa).

Belongs to the eukaryotic ribosomal protein eL20 family. Part of the 50S ribosomal subunit. Binds 23S rRNA.

The protein is Large ribosomal subunit protein eL20 of Methanococcus maripaludis (strain C5 / ATCC BAA-1333).